The primary structure comprises 403 residues: Putative glutamate--cysteine ligase 2 (403 aa).

The segment at 370–403 (ESAAQRRAPQAARRRIRASSEPLGPMSMWPERLH) is disordered.

Belongs to the glutamate--cysteine ligase type 2 family. YbdK subfamily.

It carries out the reaction L-cysteine + L-glutamate + ATP = gamma-L-glutamyl-L-cysteine + ADP + phosphate + H(+). ATP-dependent carboxylate-amine ligase which exhibits weak glutamate--cysteine ligase activity. The sequence is that of Putative glutamate--cysteine ligase 2 from Bordetella avium (strain 197N).